The chain runs to 528 residues: Na(+)/H(+) antiporter NhaB (528 aa).

The next 11 helical transmembrane spans lie at 10–30, 63–83, 96–116, 131–165, 204–224, 240–260, 305–325, 359–379, 391–411, 449–469, and 476–496; these read IGNFLGNSPKWYKIAILSFLI, YPLQPGGLLAIEAVAIGMTSA, VLLLLVFMVAGIYFMKQLLLF, VSLMFCLTSAFLSAFLDALTVIAVIIAVAVGFYAI, LLMHAGVGTALGGVCTMVGEP, FVVRMSPVTVPVLIAGILTCL, VLVGVWLIAGLALHLASVGLV, LAVFFAVVAVIIDQHLFAPVI, LVIFYIANGLLSMVSDNVFVG, ATPNGQAAFLFLLTSALAPLI, and MVWMALPYTIVLSVVGVLAIE.

Belongs to the NhaB Na(+)/H(+) (TC 2.A.34) antiporter family.

The protein resides in the cell inner membrane. It catalyses the reaction 2 Na(+)(in) + 3 H(+)(out) = 2 Na(+)(out) + 3 H(+)(in). Its function is as follows. Na(+)/H(+) antiporter that extrudes sodium in exchange for external protons. This chain is Na(+)/H(+) antiporter NhaB, found in Shewanella sp. (strain W3-18-1).